We begin with the raw amino-acid sequence, 455 residues long: Hydroxymethylglutaryl-CoA synthase 2 (455 aa).

Glu86 serves as the catalytic Proton donor/acceptor. The active-site Acyl-thioester intermediate is Cys120. The (3S)-3-hydroxy-3-methylglutaryl-CoA site is built by Cys120, Thr161, Ser211, His255, Lys264, Asn329, and Ser363. His255 acts as the Proton donor/acceptor in catalysis.

This sequence belongs to the thiolase-like superfamily. HMG-CoA synthase family.

It carries out the reaction acetoacetyl-CoA + acetyl-CoA + H2O = (3S)-3-hydroxy-3-methylglutaryl-CoA + CoA + H(+). Its pathway is metabolic intermediate biosynthesis; (R)-mevalonate biosynthesis; (R)-mevalonate from acetyl-CoA: step 2/3. Its function is as follows. This enzyme condenses acetyl-CoA with acetoacetyl-CoA to form HMG-CoA, which is the substrate for HMG-CoA reductase. This chain is Hydroxymethylglutaryl-CoA synthase 2 (HMGCS-2), found in Blattella germanica (German cockroach).